The chain runs to 371 residues: Barbiturase 2 (371 aa).

Positions 1–104 (MTRPIEVRKV…TIFAYAPEGR (104 aa)) are RU A. Substrate contacts are provided by residues Arg53 and 83–84 (SG). An RU B region spans residues 112 to 247 (RVTVGYAMSE…AQIVVVGNAR (136 aa)). Lys162 is a catalytic residue. Substrate contacts are provided by residues Asn194 and 230 to 231 (SS). Ser230 acts as the Nucleophile in catalysis. The RU C stretch occupies residues 253-371 (FRVGHSIMKD…PVIAIVDLEA (119 aa)). Mg(2+) is bound at residue Glu303. Residues Lys330 and 349–350 (SV) each bind substrate. Mg(2+) contacts are provided by Ala352, Gln355, Gly356, Pro357, and Gly360.

This sequence belongs to the cyclic amide hydrolase (CyAH) family. In terms of assembly, homotetramer.

The catalysed reaction is barbiturate + H2O = 3-oxo-3-ureidopropanoate. Its pathway is pyrimidine metabolism; uracil degradation via oxidative pathway; malonate and urea from uracil: step 2/3. In terms of biological role, responsible for the hydrolysis of barbituric acid (2,4,6-trihydroxy-1,3-pyrimidine), an intermediate in the oxidative catabolism of pyrimidines. Catalyzes the hydrolytic opening of the pyrimidine ring of barbituric acid to yield ureidomalonic acid. Can also use cyanuric acid as a substrate, albeit with lower efficiency. The sequence is that of Barbiturase 2 from Nocardioides sp. (strain ATCC BAA-499 / JS614).